A 37-amino-acid polypeptide reads, in one-letter code: Large ribosomal subunit protein bL36 (37 aa).

This sequence belongs to the bacterial ribosomal protein bL36 family.

The chain is Large ribosomal subunit protein bL36 from Halorhodospira halophila (strain DSM 244 / SL1) (Ectothiorhodospira halophila (strain DSM 244 / SL1)).